Reading from the N-terminus, the 342-residue chain is Deoxyguanosinetriphosphate triphosphohydrolase-like protein (342 aa).

The HD domain maps to 75–190 (RLVHTLEVSQ…VRFADKIAYV (116 aa)).

It belongs to the dGTPase family. Type 2 subfamily.

The protein is Deoxyguanosinetriphosphate triphosphohydrolase-like protein of Clostridium perfringens (strain SM101 / Type A).